Here is a 357-residue protein sequence, read N- to C-terminus: Embryonic growth/differentiation factor 1 (357 aa).

The first 23 residues, 1–23 (MLPVCHRFCDHLLLLLLLPSTTL), serve as a signal peptide directing secretion. A propeptide spanning residues 24–237 (APAPASMGPA…RLCPLPRLRR (214 aa)) is cleaved from the precursor. Asn-191 is a glycosylation site (N-linked (GlcNAc...) asparagine). 3 cysteine pairs are disulfide-bonded: Cys-251/Cys-322, Cys-280/Cys-354, and Cys-284/Cys-356.

It belongs to the TGF-beta family. In terms of assembly, homodimer; disulfide-linked. As to expression, expressed almost exclusively in the nervous system.

The protein resides in the secreted. Functionally, may mediate cell differentiation events during embryonic development. This chain is Embryonic growth/differentiation factor 1 (Gdf1), found in Mus musculus (Mouse).